Reading from the N-terminus, the 428-residue chain is Adenylosuccinate synthetase (428 aa).

GTP is bound by residues 12 to 18 (GDEGKGK) and 40 to 42 (GHT). The active-site Proton acceptor is the Asp-13. Positions 13 and 40 each coordinate Mg(2+). Residues 13–16 (DEGK), 38–41 (NAGH), Thr-128, Arg-142, Gln-223, Thr-238, and Arg-302 contribute to the IMP site. His-41 acts as the Proton donor in catalysis. 298-304 (TTTGRPR) is a binding site for substrate. Residues Arg-304, 330–332 (KLD), and 412–414 (SVG) contribute to the GTP site.

The protein belongs to the adenylosuccinate synthetase family. In terms of assembly, homodimer. Requires Mg(2+) as cofactor.

It is found in the cytoplasm. The enzyme catalyses IMP + L-aspartate + GTP = N(6)-(1,2-dicarboxyethyl)-AMP + GDP + phosphate + 2 H(+). It functions in the pathway purine metabolism; AMP biosynthesis via de novo pathway; AMP from IMP: step 1/2. In terms of biological role, plays an important role in the de novo pathway of purine nucleotide biosynthesis. Catalyzes the first committed step in the biosynthesis of AMP from IMP. In Brevibacillus brevis (strain 47 / JCM 6285 / NBRC 100599), this protein is Adenylosuccinate synthetase.